The following is a 132-amino-acid chain: Large ribosomal subunit protein bL17 (132 aa).

The protein belongs to the bacterial ribosomal protein bL17 family. In terms of assembly, part of the 50S ribosomal subunit. Contacts protein L32.

This chain is Large ribosomal subunit protein bL17, found in Shewanella woodyi (strain ATCC 51908 / MS32).